The sequence spans 365 residues: Flagellar P-ring protein (365 aa).

The signal sequence occupies residues 1-19 (MIKFLSALILLLVITAAQA).

It belongs to the FlgI family. As to quaternary structure, the basal body constitutes a major portion of the flagellar organelle and consists of four rings (L,P,S, and M) mounted on a central rod.

Its subcellular location is the periplasm. The protein localises to the bacterial flagellum basal body. Assembles around the rod to form the L-ring and probably protects the motor/basal body from shearing forces during rotation. This is Flagellar P-ring protein from Escherichia coli O81 (strain ED1a).